The sequence spans 480 residues: uncharacterized protein (480 aa).

Residues 16-46 constitute a DNA-binding region (zn(2)-C6 fungal-type); the sequence is CDRCRRRKIRCTGSDIPGQPCLACQKAHADC. The segment covering 298–307 has biased composition (low complexity); the sequence is SFGASVSPKS. Residues 298-325 form a disordered region; that stretch reads SFGASVSPKSTPGSNSTGAAVDTNSVHS. Residues 308–325 are compositionally biased toward polar residues; it reads TPGSNSTGAAVDTNSVHS.

The protein localises to the cytoplasm. It is found in the nucleus. This is an uncharacterized protein from Schizosaccharomyces pombe (strain 972 / ATCC 24843) (Fission yeast).